Reading from the N-terminus, the 209-residue chain is NAD(P)H-quinone oxidoreductase subunit K 2 (209 aa).

Positions 53, 54, 118, and 149 each coordinate [4Fe-4S] cluster.

It belongs to the complex I 20 kDa subunit family. In terms of assembly, NDH-1 can be composed of about 15 different subunits; different subcomplexes with different compositions have been identified which probably have different functions. [4Fe-4S] cluster is required as a cofactor.

The protein localises to the cellular thylakoid membrane. The catalysed reaction is a plastoquinone + NADH + (n+1) H(+)(in) = a plastoquinol + NAD(+) + n H(+)(out). The enzyme catalyses a plastoquinone + NADPH + (n+1) H(+)(in) = a plastoquinol + NADP(+) + n H(+)(out). In terms of biological role, NDH-1 shuttles electrons from an unknown electron donor, via FMN and iron-sulfur (Fe-S) centers, to quinones in the respiratory and/or the photosynthetic chain. The immediate electron acceptor for the enzyme in this species is believed to be plastoquinone. Couples the redox reaction to proton translocation, and thus conserves the redox energy in a proton gradient. Cyanobacterial NDH-1 also plays a role in inorganic carbon-concentration. In Acaryochloris marina (strain MBIC 11017), this protein is NAD(P)H-quinone oxidoreductase subunit K 2.